Reading from the N-terminus, the 198-residue chain is UPF0301 protein BDI_1431 (198 aa).

This sequence belongs to the UPF0301 (AlgH) family.

The protein is UPF0301 protein BDI_1431 of Parabacteroides distasonis (strain ATCC 8503 / DSM 20701 / CIP 104284 / JCM 5825 / NCTC 11152).